A 183-amino-acid polypeptide reads, in one-letter code: Copper transporter 4 (183 aa).

The tract at residues 1-21 (MAMPMPMPPPGPGGDAPPAPT) is disordered. The next 2 membrane-spanning stretches (helical) occupy residues 56–76 (VGMYFLCLLLVLALAALAEAL) and 115–135 (LAYLVMLAVMSFNAGVLLAAV).

This sequence belongs to the copper transporter (Ctr) (TC 1.A.56) family. SLC31A subfamily.

The protein resides in the membrane. Involved in the transport of copper. The protein is Copper transporter 4 (COPT4) of Oryza sativa subsp. japonica (Rice).